Reading from the N-terminus, the 367-residue chain is Probable dual-specificity RNA methyltransferase RlmN (367 aa).

Catalysis depends on E92, which acts as the Proton acceptor. The Radical SAM core domain occupies Q98–N326. An intrachain disulfide couples C105 to C341. The [4Fe-4S] cluster site is built by C112, C116, and C119. S-adenosyl-L-methionine-binding positions include G164–E165, S196, S219–H221, and N297. C341 (S-methylcysteine intermediate) is an active-site residue.

The protein belongs to the radical SAM superfamily. RlmN family. Requires [4Fe-4S] cluster as cofactor.

It is found in the cytoplasm. It carries out the reaction adenosine(2503) in 23S rRNA + 2 reduced [2Fe-2S]-[ferredoxin] + 2 S-adenosyl-L-methionine = 2-methyladenosine(2503) in 23S rRNA + 5'-deoxyadenosine + L-methionine + 2 oxidized [2Fe-2S]-[ferredoxin] + S-adenosyl-L-homocysteine. It catalyses the reaction adenosine(37) in tRNA + 2 reduced [2Fe-2S]-[ferredoxin] + 2 S-adenosyl-L-methionine = 2-methyladenosine(37) in tRNA + 5'-deoxyadenosine + L-methionine + 2 oxidized [2Fe-2S]-[ferredoxin] + S-adenosyl-L-homocysteine. Functionally, specifically methylates position 2 of adenine 2503 in 23S rRNA and position 2 of adenine 37 in tRNAs. This chain is Probable dual-specificity RNA methyltransferase RlmN, found in Listeria monocytogenes serovar 1/2a (strain ATCC BAA-679 / EGD-e).